The primary structure comprises 472 residues: Serine/threonine-protein kinase ULK3 (472 aa).

The Protein kinase domain occupies 14 to 270; it reads FILTERLGSG…FKDFFAHPWV (257 aa). Residues 20-28 and Lys-44 contribute to the ATP site; that span reads LGSGTYATV. Asp-137 (proton acceptor) is an active-site residue. Position 176 is a phosphoserine (Ser-176). Positions 280 to 348 constitute an MIT 1 domain; sequence SLAQARALVV…SRAEELKAIV (69 aa). 3 positions are modified to phosphoserine; by autocatalysis: Ser-350, Ser-384, and Ser-464. The region spanning 375-444 is the MIT 2 domain; that stretch reads RLLAALEVAS…ARAEYLKEQI (70 aa).

This sequence belongs to the protein kinase superfamily. Ser/Thr protein kinase family. APG1/unc-51/ULK1 subfamily. As to quaternary structure, interacts (via protein kinase domain) with SUFU. In terms of processing, autophosphorylated. Autophosphorylation is blocked by interaction with SUFU.

It localises to the cytoplasm. The enzyme catalyses L-seryl-[protein] + ATP = O-phospho-L-seryl-[protein] + ADP + H(+). It catalyses the reaction L-threonyl-[protein] + ATP = O-phospho-L-threonyl-[protein] + ADP + H(+). Serine/threonine protein kinase that acts as a regulator of Sonic hedgehog (SHH) signaling and autophagy. Acts as a negative regulator of SHH signaling in the absence of SHH ligand: interacts with SUFU, thereby inactivating the protein kinase activity and preventing phosphorylation of GLI proteins (GLI1, GLI2 and/or GLI3). Positively regulates SHH signaling in the presence of SHH: dissociates from SUFU, autophosphorylates and mediates phosphorylation of GLI2, activating it and promoting its nuclear translocation. Phosphorylates in vitro GLI2, as well as GLI1 and GLI3, although less efficiently. Also acts as a regulator of autophagy: following cellular senescence, able to induce autophagy. The chain is Serine/threonine-protein kinase ULK3 (Ulk3) from Mus musculus (Mouse).